The following is a 307-amino-acid chain: 4-hydroxythreonine-4-phosphate dehydrogenase (307 aa).

Substrate is bound by residues His126 and Thr127. The a divalent metal cation site is built by His156, His195, and His251. Lys259, Asn268, and Arg277 together coordinate substrate.

It belongs to the PdxA family. As to quaternary structure, homodimer. Zn(2+) is required as a cofactor. Requires Mg(2+) as cofactor. The cofactor is Co(2+).

It is found in the cytoplasm. It catalyses the reaction 4-(phosphooxy)-L-threonine + NAD(+) = 3-amino-2-oxopropyl phosphate + CO2 + NADH. Its pathway is cofactor biosynthesis; pyridoxine 5'-phosphate biosynthesis; pyridoxine 5'-phosphate from D-erythrose 4-phosphate: step 4/5. Functionally, catalyzes the NAD(P)-dependent oxidation of 4-(phosphooxy)-L-threonine (HTP) into 2-amino-3-oxo-4-(phosphooxy)butyric acid which spontaneously decarboxylates to form 3-amino-2-oxopropyl phosphate (AHAP). The protein is 4-hydroxythreonine-4-phosphate dehydrogenase of Helicobacter pylori (strain HPAG1).